Here is a 22-residue protein sequence, read N- to C-terminus: Unknown protein 20 from 2D-PAGE (22 aa).

This chain is Unknown protein 20 from 2D-PAGE, found in Bombyx mori (Silk moth).